Consider the following 252-residue polypeptide: 3-dehydroquinate dehydratase (252 aa).

Residues 46–48 and R82 contribute to the 3-dehydroquinate site; that span reads EWR. The Proton donor/acceptor role is filled by H143. Residue K170 is the Schiff-base intermediate with substrate of the active site. The 3-dehydroquinate site is built by R212, S231, and Q235.

The protein belongs to the type-I 3-dehydroquinase family. As to quaternary structure, homodimer.

The catalysed reaction is 3-dehydroquinate = 3-dehydroshikimate + H2O. It functions in the pathway metabolic intermediate biosynthesis; chorismate biosynthesis; chorismate from D-erythrose 4-phosphate and phosphoenolpyruvate: step 3/7. Involved in the third step of the chorismate pathway, which leads to the biosynthesis of aromatic amino acids. Catalyzes the cis-dehydration of 3-dehydroquinate (DHQ) and introduces the first double bond of the aromatic ring to yield 3-dehydroshikimate. This Listeria monocytogenes serotype 4a (strain HCC23) protein is 3-dehydroquinate dehydratase.